The chain runs to 416 residues: Exodeoxyribonuclease 7 large subunit (416 aa).

Belongs to the XseA family. As to quaternary structure, heterooligomer composed of large and small subunits.

Its subcellular location is the cytoplasm. It carries out the reaction Exonucleolytic cleavage in either 5'- to 3'- or 3'- to 5'-direction to yield nucleoside 5'-phosphates.. Functionally, bidirectionally degrades single-stranded DNA into large acid-insoluble oligonucleotides, which are then degraded further into small acid-soluble oligonucleotides. This chain is Exodeoxyribonuclease 7 large subunit, found in Sulfurimonas denitrificans (strain ATCC 33889 / DSM 1251) (Thiomicrospira denitrificans (strain ATCC 33889 / DSM 1251)).